The sequence spans 460 residues: Serine incorporator 5 (460 aa).

Residues 1-36 (MCTPCCVSQLACCCGSAACSLCCGCCPKIKQSTSTR) lie on the Extracellular side of the membrane. The helical transmembrane segment at 37–57 (FMYALFFMLVTVTCVIMMSPT) threads the bilayer. Residues 58 to 89 (VEMAMREHIPFYSQMCQQLNAGENCSTLVGYS) lie on the Cytoplasmic side of the membrane. A helical membrane pass occupies residues 90–110 (AVYKVCFGMACFFFFFAVFTI). Residues 111 to 124 (RVQNSTGCRAAVHN) are Extracellular-facing. N114 carries an N-linked (GlcNAc...) asparagine glycan. Residues 125–145 (GFWFFKFVALLACCAGGFFLP) traverse the membrane as a helical segment. Residues 146–156 (NQDQFLEVWRY) are Cytoplasmic-facing. Residues 157-177 (VGAAGGFLFIIIQLMLLVQFA) traverse the membrane as a helical segment. Topologically, residues 178–197 (HRWNQNWSSGATYNKLWYAA) are extracellular. N-linked (GlcNAc...) asparagine glycosylation occurs at N183. A helical membrane pass occupies residues 198 to 218 (LALVTLVLFSVAVGGMVFMFM). Topologically, residues 219–230 (YYTHPEACFLNK) are cytoplasmic. The helical transmembrane segment at 231–251 (IFLGVNGGLCFIVSLLAISPC) threads the bilayer. Residues 252–259 (IQTFQPTS) are Extracellular-facing. The chain crosses the membrane as a helical span at residues 260–280 (GLLQPAVITLYVMYLTFSALA). Residues 281-311 (SKPIEMVEDEIKGNITVCVFPFKSGLKSDTN) are Cytoplasmic-facing. A helical membrane pass occupies residues 312–332 (IVTGVGTAILFCCILYSCLIS). Over 333–391 (TTKRSSAALQVYRNDMPENERARCCFCWVDDTEDYDDEKTSGGQNVKYDERDGTVYSYC) the chain is Extracellular. Residues 392–412 (FFHFVFFLGSLYVMMTVTNWF) form a helical membrane-spanning segment. Topologically, residues 413–433 (HYDNAKIERLLEGSWSVFWIK) are cytoplasmic. A helical membrane pass occupies residues 434 to 454 (MASSWVCLFFYMWTLVVPMLF). Residues 455-460 (PQRFQA) are Extracellular-facing.

Belongs to the TDE1 family.

It is found in the cell membrane. The enzyme catalyses a 1,2-diacyl-sn-glycero-3-phospho-L-serine(in) = a 1,2-diacyl-sn-glycero-3-phospho-L-serine(out). The catalysed reaction is a 1,2-diacyl-sn-glycero-3-phosphocholine(in) = a 1,2-diacyl-sn-glycero-3-phosphocholine(out). It carries out the reaction a 1,2-diacyl-sn-glycero-3-phosphoethanolamine(in) = a 1,2-diacyl-sn-glycero-3-phosphoethanolamine(out). Restriction factor required to restrict infectivity of gammaretroviruses: acts by inhibiting an early step of viral infection. Impairs the penetration of the viral particle into the cytoplasm. Non-ATP-dependent, non-specific lipid transporter for phosphatidylserine, phosphatidylcholine, and phosphatidylethanolamine. Functions as a scramblase that flips lipids in both directions across the membrane. Phospholipid scrambling results in gammaretroviral surface exposure of phosphatidylserine and loss of membrane asymmetry, which leads to loss of infectivity. Enhances the incorporation of serine into phosphatidylserine and sphingolipids. This chain is Serine incorporator 5 (serinc5), found in Danio rerio (Zebrafish).